Here is a 473-residue protein sequence, read N- to C-terminus: Serine/threonine-protein phosphatase 2A activator 1 (473 aa).

The segment at 360–473 (NAVPPPTSAH…HVPTKAPWAK (114 aa)) is disordered. Positions 368 to 378 (AHMSTTQSQSR) are enriched in polar residues. A compositionally biased stretch (low complexity) spans 395-416 (APWATATQAAPPAGAGTAAPWA).

Belongs to the PTPA-type PPIase family.

It is found in the cytoplasm. The protein localises to the nucleus. The enzyme catalyses [protein]-peptidylproline (omega=180) = [protein]-peptidylproline (omega=0). In terms of biological role, PPIases accelerate the folding of proteins. It catalyzes the cis-trans isomerization of proline imidic peptide bonds in oligopeptides. Acts as a regulatory subunit for PP2A-like phosphatases modulating their activity or substrate specificity, probably by inducing a conformational change in the catalytic subunit, a direct target of the PPIase. Can reactivate inactive phosphatase PP2A-phosphatase methylesterase complexes (PP2Ai) in presence of ATP and Mg(2+) by dissociating the inactive form from the complex. In Aspergillus fumigatus (strain ATCC MYA-4609 / CBS 101355 / FGSC A1100 / Af293) (Neosartorya fumigata), this protein is Serine/threonine-protein phosphatase 2A activator 1 (rrd1).